Here is a 301-residue protein sequence, read N- to C-terminus: Probable alpha-L-glutamate ligase (301 aa).

The region spanning 104-287 is the ATP-grasp domain; the sequence is LQLLSRRGIG…VAGMIIEHLE (184 aa). ATP contacts are provided by residues lysine 141, 178–179, aspartate 187, and 211–213; these read EY and RSN. Positions 248, 260, and 262 each coordinate Mg(2+). The Mn(2+) site is built by aspartate 248, glutamate 260, and asparagine 262.

The protein belongs to the RimK family. Mg(2+) is required as a cofactor. Requires Mn(2+) as cofactor.

In Pseudomonas entomophila (strain L48), this protein is Probable alpha-L-glutamate ligase.